A 622-amino-acid chain; its full sequence is Low affinity potassium transport system protein Kup (622 aa).

12 consecutive transmembrane segments (helical) span residues 9-29 (LPAV…TSPL), 52-72 (FLSL…LLFV), 99-119 (TPVL…EVVI), 137-157 (PSLQ…LFFI), 165-185 (VGKL…VLGV), 213-233 (VSFF…ALYA), 247-267 (WFSA…ALLL), 276-296 (PFFL…ATLA), 337-357 (IYIP…IVSF), 363-383 (LAAA…ILSC), 394-414 (LLIV…MFAA), and 419-439 (IFSG…AMIT).

Belongs to the HAK/KUP transporter (TC 2.A.72) family.

It is found in the cell inner membrane. It catalyses the reaction K(+)(in) + H(+)(in) = K(+)(out) + H(+)(out). Functionally, responsible for the low-affinity transport of potassium into the cell. Likely operates as a K(+):H(+) symporter. The protein is Low affinity potassium transport system protein Kup of Sodalis glossinidius (strain morsitans).